The chain runs to 279 residues: Shikimate dehydrogenase (NADP(+)) (279 aa).

Residues 20–22 (SRS) and Thr-67 each bind shikimate. Lys-71 serves as the catalytic Proton acceptor. Asp-83 is a binding site for NADP(+). Shikimate contacts are provided by Asn-92 and Asp-108. Residues 134–138 (GAGGA) and Leu-223 each bind NADP(+). Tyr-225 is a shikimate binding site. Gly-246 contacts NADP(+).

It belongs to the shikimate dehydrogenase family. In terms of assembly, homodimer.

The catalysed reaction is shikimate + NADP(+) = 3-dehydroshikimate + NADPH + H(+). Its pathway is metabolic intermediate biosynthesis; chorismate biosynthesis; chorismate from D-erythrose 4-phosphate and phosphoenolpyruvate: step 4/7. Its function is as follows. Involved in the biosynthesis of the chorismate, which leads to the biosynthesis of aromatic amino acids. Catalyzes the reversible NADPH linked reduction of 3-dehydroshikimate (DHSA) to yield shikimate (SA). The sequence is that of Shikimate dehydrogenase (NADP(+)) from Cereibacter sphaeroides (strain ATCC 17029 / ATH 2.4.9) (Rhodobacter sphaeroides).